Reading from the N-terminus, the 140-residue chain is Nucleoside diphosphate kinase (140 aa).

The ATP site is built by lysine 11, phenylalanine 59, arginine 87, threonine 93, arginine 104, and asparagine 114. Catalysis depends on histidine 117, which acts as the Pros-phosphohistidine intermediate.

This sequence belongs to the NDK family. As to quaternary structure, homotetramer. It depends on Mg(2+) as a cofactor.

Its subcellular location is the cytoplasm. It carries out the reaction a 2'-deoxyribonucleoside 5'-diphosphate + ATP = a 2'-deoxyribonucleoside 5'-triphosphate + ADP. The catalysed reaction is a ribonucleoside 5'-diphosphate + ATP = a ribonucleoside 5'-triphosphate + ADP. In terms of biological role, major role in the synthesis of nucleoside triphosphates other than ATP. The ATP gamma phosphate is transferred to the NDP beta phosphate via a ping-pong mechanism, using a phosphorylated active-site intermediate. The protein is Nucleoside diphosphate kinase of Rickettsia canadensis (strain McKiel).